The following is a 419-amino-acid chain: UDP-N-acetylglucosamine 1-carboxyvinyltransferase (419 aa).

22 to 23 lines the phosphoenolpyruvate pocket; sequence KN. R91 contributes to the UDP-N-acetyl-alpha-D-glucosamine binding site. The Proton donor role is filled by C115. 2-(S-cysteinyl)pyruvic acid O-phosphothioketal is present on C115. UDP-N-acetyl-alpha-D-glucosamine contacts are provided by residues 120-124, 160-163, D305, and V327; these read RPVDL and KVSV.

This sequence belongs to the EPSP synthase family. MurA subfamily.

It localises to the cytoplasm. It catalyses the reaction phosphoenolpyruvate + UDP-N-acetyl-alpha-D-glucosamine = UDP-N-acetyl-3-O-(1-carboxyvinyl)-alpha-D-glucosamine + phosphate. The protein operates within cell wall biogenesis; peptidoglycan biosynthesis. Its function is as follows. Cell wall formation. Adds enolpyruvyl to UDP-N-acetylglucosamine. The sequence is that of UDP-N-acetylglucosamine 1-carboxyvinyltransferase from Shigella dysenteriae serotype 1 (strain Sd197).